The sequence spans 79 residues: MKYVALAFVLSLVILQISAQGGGLTSLLLQKEYMPDNWFDYKLAQMLLGGTRGRKSRTQSGRNQGKSTSDSWLWLALAS.

The signal sequence occupies residues 1–19 (MKYVALAFVLSLVILQISA). The segment at 52-71 (RGRKSRTQSGRNQGKSTSDS) is disordered. The segment covering 58–71 (TQSGRNQGKSTSDS) has biased composition (polar residues).

As to expression, nacreous layer of shell (at protein level). Expressed primarily in the mantle with highest level in the mantle pallium and lower level in the mantle edge.

It is found in the secreted. This is an uncharacterized protein from Margaritifera margaritifera (Freshwater pearl mussel).